A 558-amino-acid chain; its full sequence is Tyrosine N-monooxygenase (558 aa).

A helical membrane pass occupies residues 13–33; it reads VLAAPLLSSSAILKLLLFVVT. The interval 48 to 67 is disordered; it reads TTKCSSTTCASPPAGVGNPP. Residues 49 to 65 show a composition bias toward low complexity; sequence TKCSSTTCASPPAGVGN. Arg138, Arg167, His422, Arg491, and Cys493 together coordinate heme b.

The protein belongs to the cytochrome P450 family. Heme b is required as a cofactor.

The protein resides in the endoplasmic reticulum membrane. It carries out the reaction L-tyrosine + 2 reduced [NADPH--hemoprotein reductase] + 2 O2 = (E)-4-hydroxyphenylacetaldehyde oxime + 2 oxidized [NADPH--hemoprotein reductase] + CO2 + 3 H2O + 2 H(+). The catalysed reaction is L-tyrosine + reduced [NADPH--hemoprotein reductase] + O2 = N-hydroxy-L-tyrosine + oxidized [NADPH--hemoprotein reductase] + H2O + 2 H(+). It catalyses the reaction N-hydroxy-L-tyrosine + reduced [NADPH--hemoprotein reductase] + O2 = N,N-dihydroxy-L-tyrosine + oxidized [NADPH--hemoprotein reductase] + H2O + H(+). The enzyme catalyses N,N-dihydroxy-L-tyrosine + H(+) = (E)-4-hydroxyphenylacetaldehyde oxime + CO2 + H2O. The protein operates within secondary metabolite biosynthesis; dhurrin biosynthesis; dhurrin from L-tyrosine: step 1/3. Functionally, cytochrome P450 involved in the biosynthesis of the cyanogenic glucoside dhurrin. Catalyzes the conversion of L-tyrosine to p-hydroxyphenylacetaldehyde oxime, via the N-hydroxy-L-tyrosine and N,N-dihydroxy-L-tyrosine intermediates. Produces the (E) isomer of the final oxime product. The sequence is that of Tyrosine N-monooxygenase (CYP79A1) from Sorghum bicolor (Sorghum).